Here is a 1212-residue protein sequence, read N- to C-terminus: Myosin-1 (1212 aa).

The disordered stretch occupies residues 1–35 (MGITRRGKDKAAAGQAVAGGASGGRARPKKATFET). Residues 41-715 (VGVSDLTLLS…TLFALEHMRD (675 aa)) enclose the Myosin motor domain. 134–141 (GESGAGKT) provides a ligand contact to ATP. Positions 405-487 (SVGILDIYGF…PGVFSALKDA (83 aa)) are actin-binding. IQ domains follow at residues 719–739 (HNMATRIQRMWRAYLAYRAES) and 740–765 (ATRIQTFWRKKRTGAEYLQLRDHGHR). In terms of domain architecture, TH1 spans 773 to 962 (RRRMSILGSR…AVHTQQGEPP (190 aa)). 2 disordered regions span residues 947–1064 (DFYK…APPA) and 1115–1212 (PAAY…DDDW). Residues 954–966 (VHTQQGEPPNSVS) are compositionally biased toward polar residues. Low complexity-rich tracts occupy residues 987-998 (RPGGPNGRPARG) and 1008-1052 (PGGA…ASVR). Residues 1053–1062 (APPPPPPAAP) show a composition bias toward pro residues. The SH3 domain occupies 1065–1124 (KAKIMAKVLYDFAGQKENEMSIKEGDLIEIVQKENNGWWLAKSGNQQAWVPAAYVEEQKQ). Pro residues predominate over residues 1125–1140 (APPPVAASRPPPPAPP). Residues 1171 to 1190 (MSLNGSDGSRSNTPTPSLGN) are compositionally biased toward polar residues.

This sequence belongs to the TRAFAC class myosin-kinesin ATPase superfamily. Myosin family.

It localises to the cytoplasm. The protein resides in the cytoskeleton. The protein localises to the actin patch. Type-I myosin implicated in the organization of the actin cytoskeleton. Required for proper actin cytoskeleton polarization. At the cell cortex, assembles in patch-like structures together with proteins from the actin-polymerizing machinery and promotes actin assembly. Functions as actin nucleation-promoting factor (NPF) for the Arp2/3 complex. In Pyricularia oryzae (strain 70-15 / ATCC MYA-4617 / FGSC 8958) (Rice blast fungus), this protein is Myosin-1 (MYO1).